We begin with the raw amino-acid sequence, 875 residues long: Alanine--tRNA ligase (875 aa).

Residues His-564, His-568, Cys-666, and His-670 each contribute to the Zn(2+) site.

Belongs to the class-II aminoacyl-tRNA synthetase family. As to quaternary structure, homotetramer. Zn(2+) serves as cofactor.

The protein resides in the cytoplasm. The enzyme catalyses tRNA(Ala) + L-alanine + ATP = L-alanyl-tRNA(Ala) + AMP + diphosphate. Catalyzes the attachment of alanine to tRNA(Ala) in a two-step reaction: alanine is first activated by ATP to form Ala-AMP and then transferred to the acceptor end of tRNA(Ala). Also edits incorrectly charged Ser-tRNA(Ala) and Gly-tRNA(Ala) via its editing domain. This chain is Alanine--tRNA ligase, found in Citrobacter koseri (strain ATCC BAA-895 / CDC 4225-83 / SGSC4696).